The following is a 509-amino-acid chain: Aspartyl/glutamyl-tRNA(Asn/Gln) amidotransferase subunit B (509 aa).

Belongs to the GatB/GatE family. GatB subfamily. As to quaternary structure, heterotrimer of A, B and C subunits.

It carries out the reaction L-glutamyl-tRNA(Gln) + L-glutamine + ATP + H2O = L-glutaminyl-tRNA(Gln) + L-glutamate + ADP + phosphate + H(+). The catalysed reaction is L-aspartyl-tRNA(Asn) + L-glutamine + ATP + H2O = L-asparaginyl-tRNA(Asn) + L-glutamate + ADP + phosphate + 2 H(+). Functionally, allows the formation of correctly charged Asn-tRNA(Asn) or Gln-tRNA(Gln) through the transamidation of misacylated Asp-tRNA(Asn) or Glu-tRNA(Gln) in organisms which lack either or both of asparaginyl-tRNA or glutaminyl-tRNA synthetases. The reaction takes place in the presence of glutamine and ATP through an activated phospho-Asp-tRNA(Asn) or phospho-Glu-tRNA(Gln). This chain is Aspartyl/glutamyl-tRNA(Asn/Gln) amidotransferase subunit B, found in Mycobacterium leprae (strain Br4923).